A 355-amino-acid polypeptide reads, in one-letter code: Phosphoribosylformylglycinamidine cyclo-ligase (355 aa).

This sequence belongs to the AIR synthase family.

Its subcellular location is the cytoplasm. The enzyme catalyses 2-formamido-N(1)-(5-O-phospho-beta-D-ribosyl)acetamidine + ATP = 5-amino-1-(5-phospho-beta-D-ribosyl)imidazole + ADP + phosphate + H(+). The protein operates within purine metabolism; IMP biosynthesis via de novo pathway; 5-amino-1-(5-phospho-D-ribosyl)imidazole from N(2)-formyl-N(1)-(5-phospho-D-ribosyl)glycinamide: step 2/2. The protein is Phosphoribosylformylglycinamidine cyclo-ligase of Beijerinckia indica subsp. indica (strain ATCC 9039 / DSM 1715 / NCIMB 8712).